A 142-amino-acid polypeptide reads, in one-letter code: Putative pre-16S rRNA nuclease (142 aa).

Belongs to the YqgF nuclease family.

The protein resides in the cytoplasm. In terms of biological role, could be a nuclease involved in processing of the 5'-end of pre-16S rRNA. In Staphylococcus carnosus (strain TM300), this protein is Putative pre-16S rRNA nuclease.